Here is an 89-residue protein sequence, read N- to C-terminus: Small ribosomal subunit protein uS15 (89 aa).

This sequence belongs to the universal ribosomal protein uS15 family. Part of the 30S ribosomal subunit. Forms a bridge to the 50S subunit in the 70S ribosome, contacting the 23S rRNA.

Functionally, one of the primary rRNA binding proteins, it binds directly to 16S rRNA where it helps nucleate assembly of the platform of the 30S subunit by binding and bridging several RNA helices of the 16S rRNA. Forms an intersubunit bridge (bridge B4) with the 23S rRNA of the 50S subunit in the ribosome. This is Small ribosomal subunit protein uS15 from Cupriavidus necator (strain ATCC 17699 / DSM 428 / KCTC 22496 / NCIMB 10442 / H16 / Stanier 337) (Ralstonia eutropha).